Consider the following 457-residue polypeptide: MEDSGFSGVVRLSNVSDFIAPNLDCIIPLETRTVEKKKEESQVNIRTKKPKDKESSKTEEKKSVKISLADCLACSGCITSAETVLVEEQSFGRVYEGIQNSKLSVVTVSPQAITSIAVKIGKSTNEVAKIIASFFRRLGVKYVIDSSFARKFAHSLIYEELSTTPSTSRPLLSSACPGFVCYAEKSHGELLIPKISKIRSPQAISGAIIKGFLAKREGLSPCDVFHAAVMPCFDKKLEASREQFKVDGTDVRETDCVISTAELLEEIIKLENDEAGDVENRSEEEQWLSALSKGSVIGDDGGASGGYADRIVRDFVLENGGGIVKTSKLNKNMFSTTVESEAGEILLRVAKVYGFRNVQNLVRKMKTKKEKTDYVEIMACPGGCANGGGQIRYETMDEREEKLIKVEALYEDLPRQDDEETWIKVREEWEKLDKNYRNLLFTDYRPVETNVAQVLKW.

[4Fe-4S] cluster is bound at residue C25. The segment at 38-59 (KEESQVNIRTKKPKDKESSKTE) is disordered. The [4Fe-4S] cluster site is built by C71, C74, C77, C176, C232, C380, and C384.

It belongs to the NARF family.

Its function is as follows. Component of the cytosolic iron-sulfur (Fe/S) protein assembly machinery. Required for maturation of extramitochondrial Fe/S proteins. This is Probable cytosolic Fe-S cluster assembly factor oxy-4 (oxy-4) from Caenorhabditis elegans.